Here is a 195-residue protein sequence, read N- to C-terminus: Probable GTP-binding protein EngB (195 aa).

The region spanning 24–195 (ELPEIALAGR…EAWDAILEKL (172 aa)) is the EngB-type G domain. GTP is bound by residues 32–39 (GRSNVGKS), 59–63 (GKTQL), 77–80 (DVPG), 144–147 (TKAD), and 176–178 (FSS). Residues S39 and T61 each coordinate Mg(2+).

The protein belongs to the TRAFAC class TrmE-Era-EngA-EngB-Septin-like GTPase superfamily. EngB GTPase family. It depends on Mg(2+) as a cofactor.

Necessary for normal cell division and for the maintenance of normal septation. This chain is Probable GTP-binding protein EngB, found in Streptococcus pneumoniae (strain ATCC 700669 / Spain 23F-1).